A 503-amino-acid chain; its full sequence is Cytochrome P450 11B1, mitochondrial (503 aa).

The N-terminal 24 residues, 1–24, are a transit peptide targeting the mitochondrion; sequence MAIWAKAEAWLAGPWLALNRARTL. Residue cysteine 450 coordinates heme.

It belongs to the cytochrome P450 family. Heme serves as cofactor.

It localises to the mitochondrion inner membrane. It catalyses the reaction a steroid + 2 reduced [adrenodoxin] + O2 + 2 H(+) = an 11beta-hydroxysteroid + 2 oxidized [adrenodoxin] + H2O. The catalysed reaction is 11-deoxycortisol + 2 reduced [adrenodoxin] + O2 + 2 H(+) = cortisol + 2 oxidized [adrenodoxin] + H2O. It carries out the reaction 21-hydroxyprogesterone + 2 reduced [adrenodoxin] + O2 + 2 H(+) = corticosterone + 2 oxidized [adrenodoxin] + H2O. The enzyme catalyses corticosterone + 2 reduced [adrenodoxin] + O2 + 2 H(+) = 18-hydroxycorticosterone + 2 oxidized [adrenodoxin] + H2O. It catalyses the reaction 18-hydroxycorticosterone + 2 reduced [adrenodoxin] + O2 + 2 H(+) = aldosterone + 2 oxidized [adrenodoxin] + 2 H2O. The catalysed reaction is 21-hydroxyprogesterone + 2 reduced [adrenodoxin] + O2 + 2 H(+) = 19-hydroxy-11-deoxycorticosterone + 2 oxidized [adrenodoxin] + H2O. It carries out the reaction 19-hydroxy-11-deoxycorticosterone + 2 reduced [adrenodoxin] + O2 + 2 H(+) = 19-oxo-11-deoxycorticosterone + 2 oxidized [adrenodoxin] + 2 H2O. Its pathway is steroid biosynthesis; glucocorticoid biosynthesis. The protein operates within steroid hormone biosynthesis. Functionally, a cytochrome P450 monooxygenase that catalyzes the biosynthesis of aldosterone and other adrenal corticoids. Differing from other species (such as human, rat and mice), it is able to catalyze three sequential oxidative reactions of 11-deoxycorticosterone (21-hydroxyprogesterone), namely 11-beta hydroxylation, followed by two successive oxidations at C18 yielding 18-hydroxy and then 18-oxo intermediates, and ending with the formation of aldosterone. Steroid 11beta, 18- and 19-hydroxylase. Mechanistically, uses molecular oxygen inserting one oxygen atom into a substrate and reducing the second into a water molecule. Two electrons are provided by NADPH via a two-protein mitochondrial transfer system comprising flavoprotein FDXR (adrenodoxin/ferredoxin reductase) and nonheme iron-sulfur protein FDX1 or FDX2 (adrenodoxin/ferredoxin). The polypeptide is Cytochrome P450 11B1, mitochondrial (CYP11B1) (Sus scrofa (Pig)).